Consider the following 255-residue polypeptide: Flap endonuclease Xni (255 aa).

D105 lines the Mg(2+) pocket. One can recognise a 5'-3' exonuclease domain in the interval 163-253 (QYQMLDFIAL…NLKQFRINPI (91 aa)). Residues L172, A173, P181, I183, and I186 each coordinate K(+). Residues 185–190 (GIGPKS) are interaction with DNA.

This sequence belongs to the Xni family. The cofactor is Mg(2+). Requires K(+) as cofactor.

Its function is as follows. Has flap endonuclease activity. During DNA replication, flap endonucleases cleave the 5'-overhanging flap structure that is generated by displacement synthesis when DNA polymerase encounters the 5'-end of a downstream Okazaki fragment. In Shewanella frigidimarina (strain NCIMB 400), this protein is Flap endonuclease Xni.